A 271-amino-acid chain; its full sequence is MNRTVFFVSESTGITAETLGHSLLSQFDTIDFEQVYMPYINTDLRAKALTQRMQEAADRDGVRPIVFATMLNNEIREILESGNCYYVELFEGFVEPLSRELGVPPSRKSGRSHAITKPSYYTKRIEAINFAMANDDGIRPDNFHRADVVLIGVSRSGKTPTCLYLAMHYGLRSANYPVTEEDFERGDVPQLVWDCRHKLFALTIDPQRLQLIREERRPGSSYASLARCQDDIRMAAQIYKRLQIPVLNTTSQSIEEISSHIIKALRGSGEH.

152–159 (GVSRSGKT) contributes to the ADP binding site.

It belongs to the pyruvate, phosphate/water dikinase regulatory protein family. PSRP subfamily.

The enzyme catalyses [pyruvate, water dikinase] + ADP = [pyruvate, water dikinase]-phosphate + AMP + H(+). It carries out the reaction [pyruvate, water dikinase]-phosphate + phosphate + H(+) = [pyruvate, water dikinase] + diphosphate. In terms of biological role, bifunctional serine/threonine kinase and phosphorylase involved in the regulation of the phosphoenolpyruvate synthase (PEPS) by catalyzing its phosphorylation/dephosphorylation. This chain is Putative phosphoenolpyruvate synthase regulatory protein, found in Thiocapsa roseopersicina.